We begin with the raw amino-acid sequence, 617 residues long: Solute carrier family 2, facilitated glucose transporter member 12 (617 aa).

The disordered stretch occupies residues 1 to 29; the sequence is MVPVENTEGPSLLNQKGTAVETEGSGSRH. Residues 1–44 lie on the Cytoplasmic side of the membrane; it reads MVPVENTEGPSLLNQKGTAVETEGSGSRHPPWARGCGMFTFLSS. A compositionally biased stretch (polar residues) spans 8–17; that stretch reads EGPSLLNQKG. The helical transmembrane segment at 45–65 threads the bilayer; sequence VTAAVSGLLVGYELGIISGAL. The Extracellular portion of the chain corresponds to 66-80; the sequence is LQIKTLLALSCHEQE. A helical membrane pass occupies residues 81–101; it reads MVVSSLVIGALLASLTGGVLI. The Cytoplasmic portion of the chain corresponds to 102 to 115; sequence DRYGRRTAIILSSC. The chain crosses the membrane as a helical span at residues 116–136; the sequence is LLGLGSLVLILSLSYTVLIVG. Arginine 137 is a topological domain (extracellular). Residues 138–158 form a helical membrane-spanning segment; sequence IAIGVSISLSSIATCVYIAEI. Residues 159–172 lie on the Cytoplasmic side of the membrane; the sequence is APQHRRGLLVSLNE. Residues 173–193 form a helical membrane-spanning segment; it reads LMIVIGILSAYISNYAFANVF. Residues 194–197 lie on the Extracellular side of the membrane; sequence HGWK. A helical transmembrane segment spans residues 198–218; it reads YMFGLVIPLGVLQAIAMYFLP. Residues 219–278 are Cytoplasmic-facing; it reads PSPRFLVMKGQEGAASKVLGRLRALSDTTEELTVIKSSLKDEYQYSFWDLFRSKDNMRTR. A helical membrane pass occupies residues 279-299; the sequence is IMIGLTLVFFVQITGQPNILF. Over 300 to 317 the chain is Extracellular; that stretch reads YASTVLKSVGFQSNEAAS. The chain crosses the membrane as a helical span at residues 318-338; that stretch reads LASTGVGVVKVISTIPATLLV. Residues 339 to 345 lie on the Cytoplasmic side of the membrane; sequence DHVGSKT. The chain crosses the membrane as a helical span at residues 346-366; it reads FLCIGSSVMAASLVTMGIVNL. The Extracellular segment spans residues 367-466; that stretch reads NIHMNFTHIC…PAFLKWLSLA (100 aa). Asparagine 371, asparagine 383, asparagine 396, and asparagine 401 each carry an N-linked (GlcNAc...) asparagine glycan. Residues 467-487 form a helical membrane-spanning segment; that stretch reads SLLVYVAAFSIGLGPMPWLVL. The Cytoplasmic portion of the chain corresponds to 488 to 498; sequence SEIFPGGIRGR. Residues 499–519 form a helical membrane-spanning segment; sequence AMALTSSMNWGINLLISLTFL. Residues 520-528 are Extracellular-facing; that stretch reads TVTDLIGLP. The chain crosses the membrane as a helical span at residues 529-549; sequence WVCFIYTIMSLASLLFVVMFI. The Cytoplasmic segment spans residues 550-617; that stretch reads PETKGCSLEQ…GQSRQLSPET (68 aa).

The protein belongs to the major facilitator superfamily. Sugar transporter (TC 2.A.1.1) family. Glucose transporter subfamily. As to expression, predominantly expressed in skeletal muscle, heart and prostate, with lower levels in brain, placenta and kidney.

Its subcellular location is the cell membrane. It is found in the endomembrane system. It localises to the cytoplasm. The protein localises to the perinuclear region. The catalysed reaction is D-glucose(out) = D-glucose(in). Its function is as follows. Insulin-independent facilitative glucose transporter. This Homo sapiens (Human) protein is Solute carrier family 2, facilitated glucose transporter member 12.